A 162-amino-acid chain; its full sequence is Phosphopantetheine adenylyltransferase (162 aa).

Ser11 contacts substrate. ATP is bound by residues 11–12 (SF) and His19. Residues Lys43, Leu75, and Arg89 each contribute to the substrate site. Residues 90-92 (GLR), Glu100, and 125-131 (YSYLSSS) each bind ATP.

The protein belongs to the bacterial CoaD family. In terms of assembly, homohexamer. It depends on Mg(2+) as a cofactor.

It is found in the cytoplasm. The catalysed reaction is (R)-4'-phosphopantetheine + ATP + H(+) = 3'-dephospho-CoA + diphosphate. Its pathway is cofactor biosynthesis; coenzyme A biosynthesis; CoA from (R)-pantothenate: step 4/5. Reversibly transfers an adenylyl group from ATP to 4'-phosphopantetheine, yielding dephospho-CoA (dPCoA) and pyrophosphate. The polypeptide is Phosphopantetheine adenylyltransferase (Geotalea uraniireducens (strain Rf4) (Geobacter uraniireducens)).